A 112-amino-acid chain; its full sequence is Large ribosomal subunit protein eL30 (112 aa).

Belongs to the eukaryotic ribosomal protein eL30 family.

This Dictyostelium discoideum (Social amoeba) protein is Large ribosomal subunit protein eL30 (rpl30).